A 172-amino-acid chain; its full sequence is Bone marrow stromal antigen 2 (172 aa).

The Cytoplasmic portion of the chain corresponds to 1-30 (MAPSFYHYLPVPMDEMGGKQGWGSHRQWLG). Residues 31-51 (AAILVVLFGVTLVILTIYFAV) traverse the membrane as a helical; Signal-anchor for type II membrane protein segment. Residues 52 to 152 (TANSVACRDG…ETSSTVQVNS (101 aa)) lie on the Extracellular side of the membrane. Asn-70 carries N-linked (GlcNAc...) asparagine glycosylation. Residues 74 to 147 (LLQRQLTRTQ…LRIQKETSST (74 aa)) adopt a coiled-coil conformation. Asn-94 carries an N-linked (GlcNAc...) asparagine; atypical glycan. N-linked (GlcNAc...) asparagine glycosylation is present at Asn-97. Ser-152 carries GPI-anchor amidated serine lipidation. Residues 153–172 (GSSMVVSSLLVLKVSLFLLF) constitute a propeptide, removed in mature form.

As to quaternary structure, parallel homodimer; disulfide-linked. May form homotetramers under reducing conditions. Isoform 1 and isoform 2 form homodimers and also heterodimers with each other. Dimerization is essential for its antiviral activity. Interacts (via cytoplasmic domain) with ARHGAP44. Interacts with MMP14 (via C-terminal cytoplasmic tail). Interacts with LILRA4/ILT7. Interacts with RNF115. In terms of tissue distribution, in naive mice, specifically expressed on type I interferon-producing cells (at protein level).

The protein resides in the golgi apparatus. It localises to the trans-Golgi network. The protein localises to the cell membrane. Its subcellular location is the late endosome. It is found in the membrane raft. The protein resides in the cytoplasm. It localises to the apical cell membrane. IFN-induced antiviral host restriction factor which efficiently blocks the release of diverse mammalian enveloped viruses by directly tethering nascent virions to the membranes of infected cells. Acts as a direct physical tether, holding virions to the cell membrane and linking virions to each other. The tethered virions can be internalized by endocytosis and subsequently degraded or they can remain on the cell surface. In either case, their spread as cell-free virions is restricted. Its target viruses belong to diverse families, including retroviridae: human immunodeficiency virus type 1 (HIV-1), mouse mammary tumor virus (MMTV) and murine leukemia virus (MLV), filoviridae: ebola virus (EBOV), arenaviridae: lassa virus (LASV), and rhabdoviridae: vesicular stomatitis virus (VSV). Can inhibit cell surface proteolytic activity of MMP14 causing decreased activation of MMP15 which results in inhibition of cell growth and migration. Can stimulate signaling by LILRA4/ILT7 and consequently provide negative feedback to the production of IFN by plasmacytoid dendritic cells in response to viral infection. Plays a role in the organization of the subapical actin cytoskeleton in polarized epithelial cells. The chain is Bone marrow stromal antigen 2 (Bst2) from Mus musculus (Mouse).